Here is a 1024-residue protein sequence, read N- to C-terminus: Protein translocase subunit SecA (1024 aa).

ATP is bound by residues glutamine 143, 161–165, and aspartate 661; that span reads GEGKT. Positions 970-1024 are disordered; the sequence is HKAAESVYTASSDEPETNQEESPQQPAIAEKKPGRNDLCPCGSGKKYKNCHGQQP. 4 residues coordinate Zn(2+): cysteine 1008, cysteine 1010, cysteine 1019, and histidine 1020.

This sequence belongs to the SecA family. Monomer and homodimer. Part of the essential Sec protein translocation apparatus which comprises SecA, SecYEG and auxiliary proteins SecDF. Other proteins may also be involved. Requires Zn(2+) as cofactor.

It localises to the cell inner membrane. Its subcellular location is the cytoplasm. It carries out the reaction ATP + H2O + cellular proteinSide 1 = ADP + phosphate + cellular proteinSide 2.. In terms of biological role, part of the Sec protein translocase complex. Interacts with the SecYEG preprotein conducting channel. Has a central role in coupling the hydrolysis of ATP to the transfer of proteins into and across the cell membrane, serving as an ATP-driven molecular motor driving the stepwise translocation of polypeptide chains across the membrane. The protein is Protein translocase subunit SecA of Pelodictyon phaeoclathratiforme (strain DSM 5477 / BU-1).